The sequence spans 173 residues: Small ribosomal subunit protein uS4c (173 aa).

Residues 94-155 (SRLDSKIYRS…TKLTSELIEK (62 aa)) enclose the S4 RNA-binding domain.

Belongs to the universal ribosomal protein uS4 family. In terms of assembly, part of the 30S ribosomal subunit. Contacts protein S5. The interaction surface between S4 and S5 is involved in control of translational fidelity.

Its subcellular location is the plastid. Functionally, one of the primary rRNA binding proteins, it binds directly to 16S rRNA where it nucleates assembly of the body of the 30S subunit. Its function is as follows. With S5 and S12 plays an important role in translational accuracy. This chain is Small ribosomal subunit protein uS4c (rps4), found in Helicosporidium sp. subsp. Simulium jonesii (Green alga).